Here is a 121-residue protein sequence, read N- to C-terminus: NADH-quinone oxidoreductase subunit 7 (121 aa).

Transmembrane regions (helical) follow at residues 11-31 (ILVF…AAAV), 65-85 (LVSI…PWAV), and 93-113 (VAFW…AYEW).

The protein belongs to the complex I subunit 3 family. As to quaternary structure, NDH-1 is composed of at least 14 different subunits, Nqo1 to Nqo14. The complex has a L-shaped structure, with the hydrophobic arm (subunits Nqo7, Nqo8, Nqo10 to Nqo14) embedded in the inner membrane and the hydrophilic peripheral arm (subunits Nqo1 to Nqo6, Nqo9) protruding into the bacterial cytoplasm. The hydrophilic domain contains all the redox centers.

The protein localises to the cell inner membrane. The catalysed reaction is a quinone + NADH + 5 H(+)(in) = a quinol + NAD(+) + 4 H(+)(out). In terms of biological role, NDH-1 shuttles electrons from NADH, via FMN and iron-sulfur (Fe-S) centers, to quinones in the respiratory chain. The immediate electron acceptor for the enzyme in this species is believed to be ubiquinone. Couples the redox reaction to proton translocation (for every two electrons transferred, four hydrogen ions are translocated across the cytoplasmic membrane), and thus conserves the redox energy in a proton gradient. The protein is NADH-quinone oxidoreductase subunit 7 (nqo7) of Paracoccus denitrificans.